Reading from the N-terminus, the 465-residue chain is tRNA modification GTPase MnmE (465 aa).

Arg-25, Glu-87, and Arg-126 together coordinate (6S)-5-formyl-5,6,7,8-tetrahydrofolate. A TrmE-type G domain is found at 222–386 (TIRVVLRGLP…LIERLVQFAE (165 aa)). GTP-binding positions include 232 to 237 (NAGKSR), 251 to 257 (TDQAGTT), and 276 to 279 (DTAG). Mg(2+) is bound by residues Ser-236 and Thr-257. (6S)-5-formyl-5,6,7,8-tetrahydrofolate is bound at residue Lys-465.

The protein belongs to the TRAFAC class TrmE-Era-EngA-EngB-Septin-like GTPase superfamily. TrmE GTPase family. As to quaternary structure, homodimer. Heterotetramer of two MnmE and two MnmG subunits. K(+) serves as cofactor.

It localises to the cytoplasm. Its function is as follows. Exhibits a very high intrinsic GTPase hydrolysis rate. Involved in the addition of a carboxymethylaminomethyl (cmnm) group at the wobble position (U34) of certain tRNAs, forming tRNA-cmnm(5)s(2)U34. The sequence is that of tRNA modification GTPase MnmE from Rhodopirellula baltica (strain DSM 10527 / NCIMB 13988 / SH1).